The primary structure comprises 306 residues: Aspartate carbamoyltransferase catalytic subunit (306 aa).

Residues R51 and T52 each contribute to the carbamoyl phosphate site. K80 provides a ligand contact to L-aspartate. Carbamoyl phosphate-binding residues include R101, H129, and Q132. Positions 162 and 224 each coordinate L-aspartate. Residues L263 and P264 each coordinate carbamoyl phosphate.

It belongs to the aspartate/ornithine carbamoyltransferase superfamily. ATCase family. As to quaternary structure, heterododecamer (2C3:3R2) of six catalytic PyrB chains organized as two trimers (C3), and six regulatory PyrI chains organized as three dimers (R2).

The enzyme catalyses carbamoyl phosphate + L-aspartate = N-carbamoyl-L-aspartate + phosphate + H(+). Its pathway is pyrimidine metabolism; UMP biosynthesis via de novo pathway; (S)-dihydroorotate from bicarbonate: step 2/3. Catalyzes the condensation of carbamoyl phosphate and aspartate to form carbamoyl aspartate and inorganic phosphate, the committed step in the de novo pyrimidine nucleotide biosynthesis pathway. In Parabacteroides distasonis (strain ATCC 8503 / DSM 20701 / CIP 104284 / JCM 5825 / NCTC 11152), this protein is Aspartate carbamoyltransferase catalytic subunit.